The primary structure comprises 233 residues: DNA repair protein RecO (233 aa).

The protein belongs to the RecO family.

Its function is as follows. Involved in DNA repair and RecF pathway recombination. The sequence is that of DNA repair protein RecO from Pseudomonas aeruginosa (strain UCBPP-PA14).